Here is an 840-residue protein sequence, read N- to C-terminus: Homeobox-leucine zipper protein HOX9 (840 aa).

Disordered regions lie at residues 1–26 and 135–160; these read MAAAVAMRSGSGSDGGGGGYDKAGMD and NPSLGNDTSCESNVTTPQNPLRDASN. A compositionally biased stretch (gly residues) spans 12 to 21; sequence GSDGGGGGYD. Positions 26–89 form a DNA-binding region, homeobox; sequence DSGKYVRYTP…NRRCRDKQRK (64 aa). Residues 86–135 are a coiled coil; the sequence is KQRKEASRLQAVNRKLTAMNKLLMEENERLQKQVSQLVHENAYMKQQLQN. Positions 157 to 385 constitute an START domain; the sequence is DASNPSGLLT…IAQETSGEVV (229 aa).

This sequence belongs to the HD-ZIP homeobox family. Class III subfamily. Expressed in seedlings, roots, stems, leaf sheaths and blades and panicles.

The protein localises to the nucleus. Functionally, probable transcription factor. The protein is Homeobox-leucine zipper protein HOX9 (HOX9) of Oryza sativa subsp. indica (Rice).